We begin with the raw amino-acid sequence, 321 residues long: ATP-dependent 6-phosphofructokinase (321 aa).

Position 12 (Gly-12) interacts with ATP. Residue 22-26 (RGVVR) coordinates ADP. ATP contacts are provided by residues 73–74 (RF) and 103–106 (GDGS). Asp-104 is a binding site for Mg(2+). Residue 127–129 (TID) participates in substrate binding. Asp-129 functions as the Proton acceptor in the catalytic mechanism. Arg-156 is a binding site for ADP. Substrate-binding positions include Arg-164 and 171–173 (MGR). ADP-binding positions include 187–189 (GCE), Lys-213, and 215–217 (KRH). Substrate-binding positions include Glu-224, Arg-245, and 251 to 254 (HTQR).

It belongs to the phosphofructokinase type A (PFKA) family. ATP-dependent PFK group I subfamily. Prokaryotic clade 'B1' sub-subfamily. In terms of assembly, homotetramer. The cofactor is Mg(2+).

It is found in the cytoplasm. The enzyme catalyses beta-D-fructose 6-phosphate + ATP = beta-D-fructose 1,6-bisphosphate + ADP + H(+). Its pathway is carbohydrate degradation; glycolysis; D-glyceraldehyde 3-phosphate and glycerone phosphate from D-glucose: step 3/4. With respect to regulation, allosterically activated by ADP and other diphosphonucleosides, and allosterically inhibited by phosphoenolpyruvate. Functionally, catalyzes the phosphorylation of D-fructose 6-phosphate to fructose 1,6-bisphosphate by ATP, the first committing step of glycolysis. In Glaesserella parasuis serovar 5 (strain SH0165) (Haemophilus parasuis), this protein is ATP-dependent 6-phosphofructokinase.